The primary structure comprises 35 residues: Photosystem II reaction center protein T (35 aa).

A helical membrane pass occupies residues 3–23 (ALVYTFLLVSTLGIIFFAIFF).

The protein belongs to the PsbT family. PSII is composed of 1 copy each of membrane proteins PsbA, PsbB, PsbC, PsbD, PsbE, PsbF, PsbH, PsbI, PsbJ, PsbK, PsbL, PsbM, PsbT, PsbY, PsbZ, Psb30/Ycf12, at least 3 peripheral proteins of the oxygen-evolving complex and a large number of cofactors. It forms dimeric complexes.

Its subcellular location is the plastid. It is found in the chloroplast thylakoid membrane. Its function is as follows. Found at the monomer-monomer interface of the photosystem II (PS II) dimer, plays a role in assembly and dimerization of PSII. PSII is a light-driven water plastoquinone oxidoreductase, using light energy to abstract electrons from H(2)O, generating a proton gradient subsequently used for ATP formation. The polypeptide is Photosystem II reaction center protein T (Bassia hyssopifolia (Fivehorn smotherweed)).